We begin with the raw amino-acid sequence, 542 residues long: Zinc finger CCHC domain-containing protein 7 (542 aa).

A disordered region spans residues 110-144; that stretch reads QAQEKTQSPATPRSNKVANKCKRSNKKPEPEESPS. The span at 112 to 126 shows a compositional bias: polar residues; sequence QEKTQSPATPRSNKV. Glycyl lysine isopeptide (Lys-Gly) (interchain with G-Cter in SUMO2) cross-links involve residues Lys129 and Lys136. Ser142 carries the post-translational modification Phosphoserine. Glycyl lysine isopeptide (Lys-Gly) (interchain with G-Cter in SUMO2) cross-links involve residues Lys236 and Lys251. 3 CCHC-type zinc fingers span residues 238–255, 260–277, and 301–318; these read VTCR…NCPL, RPCC…GCPA, and KRCD…ACPE. Residue Lys336 forms a Glycyl lysine isopeptide (Lys-Gly) (interchain with G-Cter in SUMO2) linkage. The CCHC-type 4 zinc-finger motif lies at 345–362; that stretch reads VYCYNCAQKGHYGHECTE. Residues 396–542 are disordered; sequence LKDIKKNGDF…RKKKPKSSGF (147 aa). Residue Lys410 forms a Glycyl lysine isopeptide (Lys-Gly) (interchain with G-Cter in SUMO2) linkage. Positions 412-421 are enriched in basic and acidic residues; the sequence is PHGEETDRYH. A compositionally biased stretch (basic residues) spans 422-435; sequence HDRRKSRFSGKRSR. A Glycyl lysine isopeptide (Lys-Gly) (interchain with G-Cter in SUMO2) cross-link involves residue Lys432. The segment covering 436 to 456 has biased composition (basic and acidic residues); it reads WPRESKETQKEKTRGREGEKH. Lys474 participates in a covalent cross-link: Glycyl lysine isopeptide (Lys-Gly) (interchain with G-Cter in SUMO2). Residues 474 to 489 are compositionally biased toward low complexity; that stretch reads KPNSSSSSNSQKPSKS. A phosphoserine mark is found at Ser478 and Ser480. Residues Lys485 and Lys488 each participate in a glycyl lysine isopeptide (Lys-Gly) (interchain with G-Cter in SUMO2) cross-link. Composition is skewed to basic and acidic residues over residues 499–510 and 518–528; these read LREEKLRRESMR and FVEDGSHDDLF. Lys531 participates in a covalent cross-link: Glycyl lysine isopeptide (Lys-Gly) (interchain with G-Cter in SUMO2). Residues 531-542 are compositionally biased toward basic residues; sequence KQRKKKPKSSGF.

Component of a nucleolar TRAMP-like complex, an ATP-dependent exosome regulatory complex consisting of a helicase (MTREX), an oligadenylate polymerase (TENT4B or TENT4A), and a substrate specific RNA-binding factor (ZCCHC7 or ZCCHC8). Several TRAMP-like complexes exist with specific compositions and are associated with nuclear, or nucleolar RNA exosomes.

Its subcellular location is the nucleus. It localises to the nucleolus. This is Zinc finger CCHC domain-containing protein 7 (Zcchc7) from Rattus norvegicus (Rat).